The sequence spans 165 residues: MMATYEGRYTDAQALRIAVVVARFNDLVTGKLLSGCLDCLARHGVDTSSNSDQLDVAWVPGAFELPIVTQTLALSGQYEVVITLGAVIRGDTPHFDVVVAEASKGIASVSRETGVPVIFGVLTTDTMQQALERAGIKSNLGWSYGLQALEMGSLMGVLRSATSAS.

Residues phenylalanine 24, 62-64 (AFE), and 86-88 (AVI) contribute to the 5-amino-6-(D-ribitylamino)uracil site. 91-92 (DT) lines the (2S)-2-hydroxy-3-oxobutyl phosphate pocket. The Proton donor role is filled by histidine 94. Phenylalanine 119 provides a ligand contact to 5-amino-6-(D-ribitylamino)uracil. Arginine 133 lines the (2S)-2-hydroxy-3-oxobutyl phosphate pocket.

Belongs to the DMRL synthase family.

It catalyses the reaction (2S)-2-hydroxy-3-oxobutyl phosphate + 5-amino-6-(D-ribitylamino)uracil = 6,7-dimethyl-8-(1-D-ribityl)lumazine + phosphate + 2 H2O + H(+). It functions in the pathway cofactor biosynthesis; riboflavin biosynthesis; riboflavin from 2-hydroxy-3-oxobutyl phosphate and 5-amino-6-(D-ribitylamino)uracil: step 1/2. Catalyzes the formation of 6,7-dimethyl-8-ribityllumazine by condensation of 5-amino-6-(D-ribitylamino)uracil with 3,4-dihydroxy-2-butanone 4-phosphate. This is the penultimate step in the biosynthesis of riboflavin. The sequence is that of 6,7-dimethyl-8-ribityllumazine synthase from Prochlorococcus marinus (strain MIT 9303).